The chain runs to 191 residues: Fe/S biogenesis protein NfuA (191 aa).

The [4Fe-4S] cluster site is built by Cys149 and Cys152.

This sequence belongs to the NfuA family. In terms of assembly, homodimer. The cofactor is [4Fe-4S] cluster.

Its function is as follows. Involved in iron-sulfur cluster biogenesis. Binds a 4Fe-4S cluster, can transfer this cluster to apoproteins, and thereby intervenes in the maturation of Fe/S proteins. Could also act as a scaffold/chaperone for damaged Fe/S proteins. The polypeptide is Fe/S biogenesis protein NfuA (Sodalis glossinidius (strain morsitans)).